The following is a 474-amino-acid chain: 3-isopropylmalate dehydratase large subunit (474 aa).

Positions 353, 414, and 417 each coordinate [4Fe-4S] cluster.

The protein belongs to the aconitase/IPM isomerase family. LeuC type 1 subfamily. As to quaternary structure, heterodimer of LeuC and LeuD. [4Fe-4S] cluster is required as a cofactor.

It catalyses the reaction (2R,3S)-3-isopropylmalate = (2S)-2-isopropylmalate. It participates in amino-acid biosynthesis; L-leucine biosynthesis; L-leucine from 3-methyl-2-oxobutanoate: step 2/4. Catalyzes the isomerization between 2-isopropylmalate and 3-isopropylmalate, via the formation of 2-isopropylmaleate. This is 3-isopropylmalate dehydratase large subunit from Pseudomonas aeruginosa (strain LESB58).